Consider the following 156-residue polypeptide: Small ribosomal subunit protein uS7 (156 aa).

It belongs to the universal ribosomal protein uS7 family. As to quaternary structure, part of the 30S ribosomal subunit. Contacts proteins S9 and S11.

Its function is as follows. One of the primary rRNA binding proteins, it binds directly to 16S rRNA where it nucleates assembly of the head domain of the 30S subunit. Is located at the subunit interface close to the decoding center, probably blocks exit of the E-site tRNA. The sequence is that of Small ribosomal subunit protein uS7 from Rippkaea orientalis (strain PCC 8801 / RF-1) (Cyanothece sp. (strain PCC 8801)).